Consider the following 197-residue polypeptide: Dephospho-CoA kinase (197 aa).

The DPCK domain occupies 2–197 (IIGITGGIAS…SALLSLANPR (196 aa)). 10–15 (ASGKST) contributes to the ATP binding site.

This sequence belongs to the CoaE family.

Its subcellular location is the cytoplasm. The enzyme catalyses 3'-dephospho-CoA + ATP = ADP + CoA + H(+). The protein operates within cofactor biosynthesis; coenzyme A biosynthesis; CoA from (R)-pantothenate: step 5/5. Its function is as follows. Catalyzes the phosphorylation of the 3'-hydroxyl group of dephosphocoenzyme A to form coenzyme A. This chain is Dephospho-CoA kinase, found in Streptococcus pyogenes serotype M28 (strain MGAS6180).